Consider the following 474-residue polypeptide: ATP synthase subunit beta 2 (474 aa).

Gly157–Thr164 contributes to the ATP binding site.

This sequence belongs to the ATPase alpha/beta chains family. F-type ATPases have 2 components, CF(1) - the catalytic core - and CF(0) - the membrane proton channel. CF(1) has five subunits: alpha(3), beta(3), gamma(1), delta(1), epsilon(1). CF(0) has three main subunits: a(1), b(2) and c(9-12). The alpha and beta chains form an alternating ring which encloses part of the gamma chain. CF(1) is attached to CF(0) by a central stalk formed by the gamma and epsilon chains, while a peripheral stalk is formed by the delta and b chains.

It is found in the cell inner membrane. It catalyses the reaction ATP + H2O + 4 H(+)(in) = ADP + phosphate + 5 H(+)(out). In terms of biological role, produces ATP from ADP in the presence of a proton gradient across the membrane. The catalytic sites are hosted primarily by the beta subunits. This chain is ATP synthase subunit beta 2, found in Polaromonas naphthalenivorans (strain CJ2).